Reading from the N-terminus, the 149-residue chain is Flagellar basal-body protein FlbY (149 aa).

The basal body constitutes a major portion of the flagellar organelle and consists of five rings (E,L,P,S, and M) mounted on a central rod.

Its subcellular location is the bacterial flagellum basal body. The sequence is that of Flagellar basal-body protein FlbY (flbY) from Caulobacter vibrioides (strain ATCC 19089 / CIP 103742 / CB 15) (Caulobacter crescentus).